The chain runs to 449 residues: Phosphoglucosamine mutase (449 aa).

Serine 101 acts as the Phosphoserine intermediate in catalysis. Positions 101, 242, 244, and 246 each coordinate Mg(2+). At serine 101 the chain carries Phosphoserine.

The protein belongs to the phosphohexose mutase family. Requires Mg(2+) as cofactor. Post-translationally, activated by phosphorylation.

The enzyme catalyses alpha-D-glucosamine 1-phosphate = D-glucosamine 6-phosphate. Catalyzes the conversion of glucosamine-6-phosphate to glucosamine-1-phosphate. The chain is Phosphoglucosamine mutase from Bradyrhizobium sp. (strain ORS 278).